Here is a 323-residue protein sequence, read N- to C-terminus: Trihelix transcription factor GT-3a (323 aa).

Over residues 1–20 the composition is skewed to basic residues; the sequence is MDRRNPFQHHHHHHQLHHHL. Residues 1–51 are disordered; sequence MDRRNPFQHHHHHHQLHHHLIQQQQLPPPPLSTTATMDPGGGGGGGERIPQ. Residues 52 to 108 form the Myb-like domain; that stretch reads WSIEETKELLAIREELDQTFMETKRNKLLWEVVAAKMADKGFVRSAEQCKSKWKNLV. 3 disordered regions span residues 147–176, 190–220, and 269–297; these read EATE…EPNQ, KRET…GTKA, and ELEE…ARAQ. A compositionally biased stretch (acidic residues) spans 164–176; it reads SDDEEEEVDEPNQ.

As to quaternary structure, homodimer. Heterodimer with GT-3B. Predominantly expressed in roots and flower buds.

It localises to the nucleus. Its function is as follows. Probable transcription factor that binds specifically to the core DNA sequence 5'-GTTAC-3'. This is Trihelix transcription factor GT-3a (GT-3A) from Arabidopsis thaliana (Mouse-ear cress).